We begin with the raw amino-acid sequence, 250 residues long: Cytochrome c oxidase subunit 2 (250 aa).

The Mitochondrial intermembrane portion of the chain corresponds to 1-27 (MGLLFNNLIMNFDAPSPWGIYFQDSAT). Residues 28 to 61 (PQMEGLVELHDNIMYYLVVILFGVGWILLSIIRN) form a helical membrane-spanning segment. The Mitochondrial matrix segment spans residues 62–77 (YISTKSPISHKYLNHG). The chain crosses the membrane as a helical span at residues 78 to 107 (TLIELIWTITPAVILILIAFPSFKLLYLMD). Topologically, residues 108-250 (EVSDPSMSVL…EKFLTWLEEQ (143 aa)) are mitochondrial intermembrane. Residues His185, Cys220, Glu222, Cys224, His228, and Met231 each coordinate Cu cation. Residue Glu222 coordinates Mg(2+).

The protein belongs to the cytochrome c oxidase subunit 2 family. As to quaternary structure, component of the cytochrome c oxidase (complex IV, CIV), a multisubunit enzyme composed of 11 subunits. The complex is composed of a catalytic core of 3 subunits Cox1, Cox2 and Cox3, encoded in the mitochondrial DNA, and 8 supernumerary subunits Cox4, Cox5a/Cox5, Cox6, Cox7, Cox8, Cox7a/Cox9, Cox6b/Cox12 and Cox6a/Cox13, which are encoded in the nuclear genome. The complex exists as a monomer or a dimer and forms respiratory supercomplexes (SCs) in the inner mitochondrial membrane with NADH-ubiquinone oxidoreductase (complex I, CI) and ubiquinol-cytochrome c oxidoreductase (cytochrome b-c1 complex, complex III, CIII), resulting in various different assemblies (supercomplexes I(1)IV(1), I(1)III(3)IV(2), III(2)IV(1) and III(2)IV(2) as well as larger supercomplexes of compositions like I(1)III(2)IV(5-6)). Requires Cu cation as cofactor.

It is found in the mitochondrion inner membrane. The enzyme catalyses 4 Fe(II)-[cytochrome c] + O2 + 8 H(+)(in) = 4 Fe(III)-[cytochrome c] + 2 H2O + 4 H(+)(out). Functionally, component of the cytochrome c oxidase, the last enzyme in the mitochondrial electron transport chain which drives oxidative phosphorylation. The respiratory chain contains 3 multisubunit complexes succinate dehydrogenase (complex II, CII), ubiquinol-cytochrome c oxidoreductase (cytochrome b-c1 complex, complex III, CIII) and cytochrome c oxidase (complex IV, CIV), that cooperate to transfer electrons derived from NADH and succinate to molecular oxygen, creating an electrochemical gradient over the inner membrane that drives transmembrane transport and the ATP synthase. Cytochrome c oxidase is the component of the respiratory chain that catalyzes the reduction of oxygen to water. Electrons originating from reduced cytochrome c in the intermembrane space (IMS) are transferred via the dinuclear copper A center (CU(A)) of Cox2 and heme A of Cox1 to the active site in Cox1, a binuclear center (BNC) formed by heme A3 and copper B (CU(B)). The BNC reduces molecular oxygen to 2 water molecules using 4 electrons from cytochrome c in the IMS and 4 protons from the mitochondrial matrix. This is Cytochrome c oxidase subunit 2 (cox-2) from Neurospora crassa (strain ATCC 24698 / 74-OR23-1A / CBS 708.71 / DSM 1257 / FGSC 987).